Reading from the N-terminus, the 184-residue chain is Peptidyl-tRNA hydrolase (184 aa).

Residue Tyr-14 participates in tRNA binding. His-19 serves as the catalytic Proton acceptor. Residues Phe-64, Asn-66, and Asn-112 each contribute to the tRNA site.

Belongs to the PTH family. Monomer.

The protein localises to the cytoplasm. The enzyme catalyses an N-acyl-L-alpha-aminoacyl-tRNA + H2O = an N-acyl-L-amino acid + a tRNA + H(+). Its function is as follows. Hydrolyzes ribosome-free peptidyl-tRNAs (with 1 or more amino acids incorporated), which drop off the ribosome during protein synthesis, or as a result of ribosome stalling. Catalyzes the release of premature peptidyl moieties from peptidyl-tRNA molecules trapped in stalled 50S ribosomal subunits, and thus maintains levels of free tRNAs and 50S ribosomes. In Listeria welshimeri serovar 6b (strain ATCC 35897 / DSM 20650 / CCUG 15529 / CIP 8149 / NCTC 11857 / SLCC 5334 / V8), this protein is Peptidyl-tRNA hydrolase.